The sequence spans 333 residues: CMP-N-acetylneuraminate-beta-galactosamide-alpha-2,3-sialyltransferase 4 (333 aa).

Over 1–8 (MTSKSHWK) the chain is Cytoplasmic. Residues 9-26 (LLALALVLVVVMVWYSIS) form a helical; Signal-anchor for type II membrane protein membrane-spanning segment. Over 27–333 (REDRYIEFFY…MGAVKNLTYF (307 aa)) the chain is Lumenal. Residues asparagine 61, asparagine 131, asparagine 310, and asparagine 329 are each glycosylated (N-linked (GlcNAc...) asparagine). The cysteines at positions 120 and 273 are disulfide-linked.

It belongs to the glycosyltransferase 29 family. Broadly expressed among tissues with highest levels in the small intestine and colon.

It localises to the golgi apparatus. The protein localises to the golgi stack membrane. It catalyses the reaction a beta-D-galactosyl-(1-&gt;3)-N-acetyl-beta-D-galactosaminyl derivative + CMP-N-acetyl-beta-neuraminate = an N-acetyl-alpha-neuraminyl-(2-&gt;3)-beta-D-galactosyl-(1-&gt;3)-N-acetyl-beta-D-galactosaminyl derivative + CMP + H(+). The enzyme catalyses a beta-D-galactosyl-(1-&gt;3)-N-acetyl-alpha-D-galactosaminyl derivative + CMP-N-acetyl-beta-neuraminate = an N-acetyl-alpha-neuraminyl-(2-&gt;3)-beta-D-galactosyl-(1-&gt;3)-N-acetyl-alpha-D-galactosaminyl derivative + CMP + H(+). The catalysed reaction is a beta-D-galactosyl-(1-&gt;4)-N-acetyl-beta-D-glucosaminyl derivative + CMP-N-acetyl-beta-neuraminate = an N-acetyl-alpha-neuraminyl-(2-&gt;3)-beta-D-galactosyl-(1-&gt;4)-N-acetyl-beta-D-glucosaminyl derivative + CMP + H(+). It carries out the reaction a ganglioside GM1 (d18:1(4E)) + CMP-N-acetyl-beta-neuraminate = a ganglioside GD1a (d18:1(4E)) + CMP + H(+). It catalyses the reaction a ganglioside GA1 (d18:1(4E)) + CMP-N-acetyl-beta-neuraminate = a ganglioside GM1b (d18:1(4E)) + CMP + H(+). The enzyme catalyses a ganglioside GT1c (d18:1(4E)) + CMP-N-acetyl-beta-neuraminate = a ganglioside GQ1c (d18:1(4E)) + CMP + H(+). The catalysed reaction is a neolactoside nLc4Cer + CMP-N-acetyl-beta-neuraminate = a neolactoside IV(3)-alpha-NeuAc-nLc4Cer + CMP + H(+). It carries out the reaction a neolactoside nLc4Cer(d18:1(4E)) + CMP-N-acetyl-beta-neuraminate = a neolactoside IV(3)-alpha-NeuAc-nLc4Cer(d18:1(4E)) + CMP + H(+). The protein operates within protein modification; protein glycosylation. In terms of biological role, a beta-galactoside alpha2-3 sialyltransferase involved in terminal sialylation of glycoproteins and glycolipids. Catalyzes the transfer of sialic acid (N-acetyl-neuraminic acid; Neu5Ac) from the nucleotide sugar donor CMP-Neu5Ac onto acceptor Galbeta-(1-&gt;3)-GalNAc- and Galbeta-(1-&gt;4)-GlcNAc-terminated glycoconjugates through an alpha2-3 linkage. Plays a major role in hemostasis. Responsible for sialylation of plasma VWF/von Willebrand factor, preventing its recognition by asialoglycoprotein receptors (ASGPR) and subsequent clearance. Regulates ASGPR-mediated clearance of platelets. Participates in the biosynthesis of the sialyl Lewis X epitopes, both on O- and N-glycans, which are recognized by SELE/E-selectin, SELP/P-selectin and SELL/L-selectin. Essential for selectin-mediated rolling and adhesion of leukocytes during extravasation. Contributes to adhesion and transendothelial migration of neutrophils likely through terminal sialylation of CXCR2. In glycosphingolipid biosynthesis, sialylates GM1 and GA1 gangliosides to form GD1a and GM1b, respectively. Metabolizes brain c-series ganglioside GT1c forming GQ1c. Synthesizes ganglioside LM1 (IV3Neu5Ac-nLc4Cer), a major structural component of peripheral nerve myelin. In Mus musculus (Mouse), this protein is CMP-N-acetylneuraminate-beta-galactosamide-alpha-2,3-sialyltransferase 4 (St3gal4).